Consider the following 428-residue polypeptide: UPF0229 protein YeaH (428 aa).

Over residues glycine 78–arginine 90 the composition is skewed to basic and acidic residues. The segment at glycine 78 to glutamate 111 is disordered. The span at glutamine 92–glutamine 103 shows a compositional bias: gly residues.

It belongs to the UPF0229 family.

This chain is UPF0229 protein YeaH, found in Salmonella paratyphi C (strain RKS4594).